The primary structure comprises 340 residues: Ferrochelatase (340 aa).

2 residues coordinate Fe cation: histidine 189 and glutamate 292.

It belongs to the ferrochelatase family.

The protein localises to the cytoplasm. The catalysed reaction is heme b + 2 H(+) = protoporphyrin IX + Fe(2+). The protein operates within porphyrin-containing compound metabolism; protoheme biosynthesis; protoheme from protoporphyrin-IX: step 1/1. Functionally, catalyzes the ferrous insertion into protoporphyrin IX. This chain is Ferrochelatase, found in Pseudomonas fluorescens biotype C.